Consider the following 92-residue polypeptide: Small ribosomal subunit protein uS19c (92 aa).

It belongs to the universal ribosomal protein uS19 family.

The protein resides in the plastid. Its subcellular location is the chloroplast. In terms of biological role, protein S19 forms a complex with S13 that binds strongly to the 16S ribosomal RNA. The protein is Small ribosomal subunit protein uS19c of Nicotiana tomentosiformis (Tobacco).